Here is a 308-residue protein sequence, read N- to C-terminus: MDALKSAGRALIRSPSLAKQSWAGGRHRKLPENWTDTRETLLEGMVFSLKYLGMTLVERPKGEELSAAAVKRIVATAKASGKKLQKVTLKVSPRGIILTDSLTSQLIENVSIYRISYCTADKMHDKVFAYIAQSQQNESLECHAFLCTKRKVAQAVTLTVAQAFKVAFEFWQVSKEEKEKREKANQEGGDVPGTRRDSTPSLKTLVATGNLLDLEEVAKAPLSTVSANTNNVDETPRPQVLGNNSVVWELDDGLDEAFSRLAQSRTNPQVLDTGLSAQDIHYAQCLSPTDWDKPDSSGIDQDDDVFTF.

M1 is modified (N-acetylmethionine). The residue at position 14 (S14) is a Phosphoserine. The PID domain maps to 41–195 (LLEGMVFSLK…QEGGDVPGTR (155 aa)). Residues 179 to 201 (EKREKANQEGGDVPGTRRDSTPS) are disordered. S198 and S201 each carry phosphoserine. The Clathrin box motif lies at 211–215 (LLDLE). An AP-2 complex binding region spans residues 248–275 (WELDDGLDEAFSRLAQSRTNPQVLDTGL). The short motif at 256-265 (EAFSRLAQSR) is the [DE]-X(1,2)-F-X-X-[FL]-X-X-X-R motif element. Positions 288 to 308 (PTDWDKPDSSGIDQDDDVFTF) are disordered.

As to quaternary structure, interacts (via PID domain) with LDLR (via NPXY motif). Binds to soluble clathrin trimers. Interacts with AP2B1; the interaction mediates the association with the AP-2 complex. Interacts with VLDLR. Interacts with LRP2.

It is found in the cytoplasm. In terms of biological role, adapter protein (clathrin-associated sorting protein (CLASP)) required for efficient endocytosis of the LDL receptor (LDLR) in polarized cells such as hepatocytes and lymphocytes, but not in non-polarized cells (fibroblasts). May be required for LDL binding and internalization but not for receptor clustering in coated pits. May facilitate the endocytosis of LDLR and LDLR-LDL complexes from coated pits by stabilizing the interaction between the receptor and the structural components of the pits. May also be involved in the internalization of other LDLR family members. Binds to phosphoinositides, which regulate clathrin bud assembly at the cell surface. Required for trafficking of LRP2 to the endocytic recycling compartment which is necessary for LRP2 proteolysis, releasing a tail fragment which translocates to the nucleus and mediates transcriptional repression. The polypeptide is Low density lipoprotein receptor adapter protein 1 (Mus musculus (Mouse)).